The primary structure comprises 221 residues: Small ribosomal subunit protein uS4c (221 aa).

Residues 26-53 (RKRTDNRCMPGQHRKKRNDSTKKTKNSK) are disordered. Over residues 37-53 (QHRKKRNDSTKKTKNSK) the composition is skewed to basic residues. Positions 103–161 (MRLDNIVFRLGMAPTIPAARQLVNHGHIVVNNKKVDISSYQCQSQDVISVTKNKTIRTL) constitute an S4 RNA-binding domain.

The protein belongs to the universal ribosomal protein uS4 family. Part of the 30S ribosomal subunit. Contacts protein S5. The interaction surface between S4 and S5 is involved in control of translational fidelity.

Its subcellular location is the plastid. The protein localises to the chloroplast. One of the primary rRNA binding proteins, it binds directly to 16S rRNA where it nucleates assembly of the body of the 30S subunit. Functionally, with S5 and S12 plays an important role in translational accuracy. This Pleurastrum terricola (Filamentous green alga) protein is Small ribosomal subunit protein uS4c (rps4).